A 124-amino-acid chain; its full sequence is Anamorsin homolog (124 aa).

The segment covering 1-20 has biased composition (polar residues); sequence MSSPAPSTSHNAANSTQAFS. 2 disordered regions span residues 1–39 and 40–124; these read MSSPAPSTSHNAANSTQAFSLKTRRPIDEDDLLTAEDRE and AKST…TDDI. [2Fe-2S] cluster-binding residues include C49, C56, C59, and C61. The tract at residues 49–61 is fe-S binding site A; sequence CATRRRACKNCTC. Residues C86, C89, C97, and C100 each coordinate [4Fe-4S] cluster. 2 consecutive short sequence motifs (cx2C motif) follow at residues 86-89 and 97-100; these read CGNC and CAGC. A fe-S binding site B region spans residues 86–100; that stretch reads CGNCAKGDAFRCAGC.

This sequence belongs to the anamorsin family. In terms of assembly, monomer. Requires [2Fe-2S] cluster as cofactor. [4Fe-4S] cluster serves as cofactor.

The protein localises to the cytoplasm. It is found in the mitochondrion intermembrane space. In terms of biological role, component of the cytosolic iron-sulfur (Fe-S) protein assembly (CIA) machinery. Required for the maturation of extramitochondrial Fe-S proteins. Part of an electron transfer chain functioning in an early step of cytosolic Fe-S biogenesis, facilitating the de novo assembly of a [4Fe-4S] cluster on the cytosolic Fe-S scaffold complex. Electrons are transferred from NADPH via a FAD- and FMN-containing diflavin oxidoreductase. Together with the diflavin oxidoreductase, also required for the assembly of the diferric tyrosyl radical cofactor of ribonucleotide reductase (RNR), probably by providing electrons for reduction during radical cofactor maturation in the catalytic small subunit. The chain is Anamorsin homolog from Trypanosoma brucei brucei (strain 927/4 GUTat10.1).